The chain runs to 563 residues: Delta-1-pyrroline-5-carboxylate dehydrogenase, mitochondrial (563 aa).

The transit peptide at 1–24 directs the protein to the mitochondrion; that stretch reads MLLRSAALCRALLARRGRAAGLCR. Position 44 is a phosphoserine (serine 44). The residue at position 52 (lysine 52) is an N6-acetyllysine. N6-acetyllysine; alternate occurs at positions 93, 99, 114, 130, and 175. An N6-succinyllysine; alternate mark is found at lysine 93, lysine 99, lysine 114, lysine 130, and lysine 175. Residues serine 208, lysine 233, and 286 to 290 each bind NAD(+); that span reads GSVPT. Glutamate 314 functions as the Proton acceptor in the catalytic mechanism. Residue lysine 318 is modified to N6-acetyllysine. N6-succinyllysine is present on lysine 347. The Nucleophile role is filled by cysteine 348. An N6-acetyllysine mark is found at lysine 365 and lysine 376. The residue at position 395 (lysine 395) is an N6-succinyllysine. Glutamate 447 is a binding site for NAD(+). Lysine 509 is modified (N6-acetyllysine; alternate). Residue lysine 509 is modified to N6-succinyllysine; alternate. Position 513 (serine 513) interacts with substrate. Lysine 531 is modified (N6-acetyllysine).

This sequence belongs to the aldehyde dehydrogenase family. Homodimer.

It localises to the mitochondrion matrix. It catalyses the reaction L-glutamate 5-semialdehyde + NAD(+) + H2O = L-glutamate + NADH + 2 H(+). Its pathway is amino-acid degradation; L-proline degradation into L-glutamate; L-glutamate from L-proline: step 2/2. In terms of biological role, irreversible conversion of delta-1-pyrroline-5-carboxylate (P5C), derived either from proline or ornithine, to glutamate. This is a necessary step in the pathway interconnecting the urea and tricarboxylic acid cycles. The preferred substrate is glutamic gamma-semialdehyde, other substrates include succinic, glutaric and adipic semialdehydes. In Bos taurus (Bovine), this protein is Delta-1-pyrroline-5-carboxylate dehydrogenase, mitochondrial (ALDH4A1).